Reading from the N-terminus, the 447-residue chain is Argininosuccinate lyase (447 aa).

The protein belongs to the lyase 1 family. Argininosuccinate lyase subfamily.

The protein resides in the cytoplasm. The catalysed reaction is 2-(N(omega)-L-arginino)succinate = fumarate + L-arginine. It functions in the pathway amino-acid biosynthesis; L-arginine biosynthesis; L-arginine from L-ornithine and carbamoyl phosphate: step 3/3. This Bacteroides fragilis (strain YCH46) protein is Argininosuccinate lyase.